A 397-amino-acid chain; its full sequence is Elongation factor Tu (397 aa).

The tr-type G domain occupies 10-206; sequence KPHVNIGTIG…AVDEYIPTPE (197 aa). Residues 19 to 26 form a G1 region; it reads GHIDHGKT. 19-26 provides a ligand contact to GTP; the sequence is GHIDHGKT. Thr26 contacts Mg(2+). Residues 62–66 form a G2 region; it reads GITIS. The interval 83–86 is G3; the sequence is DCPG. GTP-binding positions include 83–87 and 138–141; these read DCPGH and NKCD. The interval 138-141 is G4; sequence NKCD. A G5 region spans residues 176 to 178; that stretch reads AAF.

Belongs to the TRAFAC class translation factor GTPase superfamily. Classic translation factor GTPase family. EF-Tu/EF-1A subfamily. In terms of assembly, monomer.

The protein resides in the cytoplasm. The catalysed reaction is GTP + H2O = GDP + phosphate + H(+). GTP hydrolase that promotes the GTP-dependent binding of aminoacyl-tRNA to the A-site of ribosomes during protein biosynthesis. The chain is Elongation factor Tu from Nocardioides sp. (strain ATCC BAA-499 / JS614).